The primary structure comprises 382 residues: Quinolinate synthase (382 aa).

The iminosuccinate site is built by His-63 and Ser-84. Cys-129 contacts [4Fe-4S] cluster. Residues 155–157 (YAN) and Ser-172 contribute to the iminosuccinate site. Residue Cys-216 participates in [4Fe-4S] cluster binding. Residues 242–244 (HPE) and Thr-259 each bind iminosuccinate. Cys-313 provides a ligand contact to [4Fe-4S] cluster.

Belongs to the quinolinate synthase family. Type 1 subfamily. [4Fe-4S] cluster is required as a cofactor.

It is found in the cytoplasm. It carries out the reaction iminosuccinate + dihydroxyacetone phosphate = quinolinate + phosphate + 2 H2O + H(+). It functions in the pathway cofactor biosynthesis; NAD(+) biosynthesis; quinolinate from iminoaspartate: step 1/1. Its function is as follows. Catalyzes the condensation of iminoaspartate with dihydroxyacetone phosphate to form quinolinate. The polypeptide is Quinolinate synthase (Ralstonia pickettii (strain 12J)).